The sequence spans 298 residues: Single myb histone 2 (298 aa).

The HTH myb-type domain maps to 1–61; the sequence is MGVPKQRWTP…KWRNLSVTAG (61 aa). Residues 28-57 constitute a DNA-binding region (H-T-H motif); sequence WRTILRDSDFSALLRLRSNVDLKDKWRNLS. Residues 124 to 192 form the H15 domain; it reads SVARLDDLIV…KVNQKYRIAP (69 aa). Positions 237-278 form a coiled coil; sequence EEAAAFAAKAVAEAEVAMAEAEEAARVAEAAENDAEAAKAFL.

Belongs to the histone H1/H5 family. SMH subfamily. In terms of assembly, forms a homodimer and heterodimers.

The protein localises to the nucleus. It is found in the chromosome. The protein resides in the nucleolus. Its subcellular location is the telomere. Binds preferentially double-stranded telomeric repeats, but may also bind to the single telomeric strand. In Zea mays (Maize), this protein is Single myb histone 2 (SMH2).